Here is a 163-residue protein sequence, read N- to C-terminus: MRALYPGSFDPLTNGHMDLIERAVALFGQVTVAVLSNPNKKPAFSVDQRIGQIQCATRHLNGIDVVSFDGLTVHCAVTHQADLILRGLRAMSDFEYELQIAHTNRSLAEDLETVFLATSTRHSFLSSSVVKEVARFGGPVDHMVPKEVAKDLNRLFNSTFPPR.

Residue Ser-8 participates in substrate binding. Residues Ser-8–Phe-9 and His-16 contribute to the ATP site. Lys-40, Thr-72, and Arg-86 together coordinate substrate. Residues Gly-87 to Arg-89, Glu-97, and His-122 to Ser-128 contribute to the ATP site.

It belongs to the bacterial CoaD family. In terms of assembly, homohexamer. The cofactor is Mg(2+).

It is found in the cytoplasm. It catalyses the reaction (R)-4'-phosphopantetheine + ATP + H(+) = 3'-dephospho-CoA + diphosphate. The protein operates within cofactor biosynthesis; coenzyme A biosynthesis; CoA from (R)-pantothenate: step 4/5. In terms of biological role, reversibly transfers an adenylyl group from ATP to 4'-phosphopantetheine, yielding dephospho-CoA (dPCoA) and pyrophosphate. The sequence is that of Phosphopantetheine adenylyltransferase from Parasynechococcus marenigrum (strain WH8102).